Consider the following 554-residue polypeptide: 3-(3-hydroxy-phenyl)propionate/3-hydroxycinnamic acid hydroxylase (554 aa).

FAD is bound by residues 17-46 (QVAIAGAGPVGLMMANYLGQMGIDVLVVEK) and 285-295 (FRIDRVLLAGD).

This sequence belongs to the PheA/TfdB FAD monooxygenase family. FAD is required as a cofactor.

The enzyme catalyses 3-(3-hydroxyphenyl)propanoate + NADH + O2 + H(+) = 3-(2,3-dihydroxyphenyl)propanoate + NAD(+) + H2O. It catalyses the reaction (2E)-3-(3-hydroxyphenyl)prop-2-enoate + NADH + O2 + H(+) = (2E)-3-(2,3-dihydroxyphenyl)prop-2-enoate + NAD(+) + H2O. Its pathway is aromatic compound metabolism; 3-phenylpropanoate degradation. Functionally, catalyzes the insertion of one atom of molecular oxygen into position 2 of the phenyl ring of 3-(3-hydroxyphenyl)propionate (3-HPP) and hydroxycinnamic acid (3HCI). In Escherichia coli O8 (strain IAI1), this protein is 3-(3-hydroxy-phenyl)propionate/3-hydroxycinnamic acid hydroxylase.